The chain runs to 840 residues: Leucine--tRNA ligase (840 aa).

The 'HIGH' region motif lies at 44-55; that stretch reads PYPSANGLHVGH. The 'KMSKS' region motif lies at 617–621; it reads KMSKS. Lys-620 lines the ATP pocket.

Belongs to the class-I aminoacyl-tRNA synthetase family.

Its subcellular location is the cytoplasm. It catalyses the reaction tRNA(Leu) + L-leucine + ATP = L-leucyl-tRNA(Leu) + AMP + diphosphate. The polypeptide is Leucine--tRNA ligase (Borrelia garinii subsp. bavariensis (strain ATCC BAA-2496 / DSM 23469 / PBi) (Borreliella bavariensis)).